The primary structure comprises 248 residues: Adenosylcobinamide-GDP ribazoletransferase (248 aa).

5 consecutive transmembrane segments (helical) span residues 30–50, 54–74, 112–132, 134–154, and 188–208; these read LAES…CYAL, VLSG…LTAV, FGAL…DAVI, AGSF…MVLA, and AVSA…LAAG.

This sequence belongs to the CobS family. Mg(2+) is required as a cofactor.

It is found in the cell inner membrane. The enzyme catalyses alpha-ribazole + adenosylcob(III)inamide-GDP = adenosylcob(III)alamin + GMP + H(+). It carries out the reaction alpha-ribazole 5'-phosphate + adenosylcob(III)inamide-GDP = adenosylcob(III)alamin 5'-phosphate + GMP + H(+). It participates in cofactor biosynthesis; adenosylcobalamin biosynthesis; adenosylcobalamin from cob(II)yrinate a,c-diamide: step 7/7. Functionally, joins adenosylcobinamide-GDP and alpha-ribazole to generate adenosylcobalamin (Ado-cobalamin). Also synthesizes adenosylcobalamin 5'-phosphate from adenosylcobinamide-GDP and alpha-ribazole 5'-phosphate. This chain is Adenosylcobinamide-GDP ribazoletransferase, found in Syntrophobacter fumaroxidans (strain DSM 10017 / MPOB).